Here is a 947-residue protein sequence, read N- to C-terminus: Zinc finger CCCH domain-containing protein 18 (947 aa).

Position 1 is an N-acetylmethionine (Met1). Disordered regions lie at residues 1–218, 275–295, and 387–921; these read MDVA…PRPT, GGPV…TESA, and YTEA…TLSR. Ser6, Ser32, Ser44, Ser57, Ser63, Ser70, Ser74, Ser79, and Ser91 each carry phosphoserine. Over residues 73–85 the composition is skewed to basic and acidic residues; sequence KSQDQDSEAHELS. The segment covering 94 to 104 has biased composition (acidic residues); sequence EEGDDAEEDGT. Thr104 is subject to Phosphothreonine. Ser105 and Ser113 each carry phosphoserine. Basic and acidic residues predominate over residues 105–119; the sequence is SDLRDEASSVTRELD. Acidic residues-rich tracts occupy residues 120–131 and 138–153; these read EHELDYDEEVPE and QEEE…EEEK. Positions 160–185 are enriched in basic and acidic residues; it reads EEGKPDVQSVGEKEPTEAAKEKKKED. Ser168 carries the post-translational modification Phosphoserine. Residues 186-202 show a composition bias toward acidic residues; that stretch reads DDGEIDDGEIDDDDLEE. Basic and acidic residues predominate over residues 203 to 212; that stretch reads GEVKDPSDRK. The C3H1-type zinc-finger motif lies at 214–240; the sequence is RPRPTCRFFMKGNCTWGMNCRFIHPGV. Basic and acidic residues predominate over residues 391–479; the sequence is EPYHNYRDRE…DRDKDKEKPK (89 aa). Ser482 carries the post-translational modification Phosphoserine. A Glycyl lysine isopeptide (Lys-Gly) (interchain with G-Cter in SUMO2) cross-link involves residue Lys505. Basic and acidic residues predominate over residues 505–515; that stretch reads KRADEWKDPWR. 3 positions are modified to phosphoserine: Ser527, Ser529, and Ser531. The segment covering 540-601 has biased composition (low complexity); it reads SASSASASNS…SRSRSFSSSP (62 aa). Positions 602-611 are enriched in pro residues; sequence SPSPTPSPHR. Residues Lys617 and Lys656 each participate in a glycyl lysine isopeptide (Lys-Gly) (interchain with G-Cter in SUMO2) cross-link. Residues 656–665 show a composition bias toward basic and acidic residues; it reads KPGDLREARR. Composition is skewed to low complexity over residues 687 to 720 and 731 to 745; these read GSSY…SVHS and ASPV…PTPA. Residues 755–769 show a composition bias toward basic and acidic residues; sequence KKEDGVREEKRKRDP. Low complexity predominate over residues 773 to 804; that stretch reads PPKSSKAPAGGKASQQAAAPQQAAPGQPQQGS. Lys809 is subject to N6-acetyllysine. Lys812 is covalently cross-linked (Glycyl lysine isopeptide (Lys-Gly) (interchain with G-Cter in SUMO2)). Basic and acidic residues predominate over residues 819–836; the sequence is AAEKGSRKRYEPSDKDRQ. Phosphoserine is present on residues Ser837, Ser846, Ser862, Ser887, and Ser890. The segment covering 887 to 918 has biased composition (low complexity); it reads SPQSKSSSKVTSVPGKATDTATAGTKSGKAST. A Glycyl lysine isopeptide (Lys-Gly) (interchain with G-Cter in SUMO2) cross-link involves residue Lys902. Positions 915 to 944 form a coiled coil; the sequence is KASTLSRREELLKQLKAVEDAIARKRAKIP.

In terms of assembly, interacts with ZFC3H1 in a RNase-insensitive manner.

It localises to the nucleus. The sequence is that of Zinc finger CCCH domain-containing protein 18 (Zc3h18) from Rattus norvegicus (Rat).